We begin with the raw amino-acid sequence, 273 residues long: Large ribosomal subunit protein uL2 (273 aa).

Residues 221 to 262 (RGTAMNPVDHPHGGGEGRNFGKHPVTPWGVQTKGKKTRHNKR) are disordered. Residues 253 to 262 (KGKKTRHNKR) show a composition bias toward basic residues.

Belongs to the universal ribosomal protein uL2 family. Part of the 50S ribosomal subunit. Forms a bridge to the 30S subunit in the 70S ribosome.

Its function is as follows. One of the primary rRNA binding proteins. Required for association of the 30S and 50S subunits to form the 70S ribosome, for tRNA binding and peptide bond formation. It has been suggested to have peptidyltransferase activity; this is somewhat controversial. Makes several contacts with the 16S rRNA in the 70S ribosome. In Haemophilus influenzae (strain ATCC 51907 / DSM 11121 / KW20 / Rd), this protein is Large ribosomal subunit protein uL2.